Here is a 170-residue protein sequence, read N- to C-terminus: N-glycosidase R617 (170 aa).

It belongs to the YbiA family.

The enzyme catalyses 2,5-diamino-6-hydroxy-4-(5-phosphoribosylamino)-pyrimidine + H2O = 2,5,6-triamino-4-hydroxypyrimidine + D-ribose 5-phosphate. It carries out the reaction 5-amino-6-(5-phospho-D-ribosylamino)uracil + H2O = 5,6-diaminouracil + D-ribose 5-phosphate. Its function is as follows. Catalyzes the hydrolysis of the N-glycosidic bond in the first two intermediates of riboflavin biosynthesis, which are highly reactive metabolites, yielding relatively innocuous products. Thus, can divert a surplus of harmful intermediates into relatively harmless products and pre-empt the damage these intermediates would otherwise do. May act on other substrates in vivo. This is N-glycosidase R617 from Acanthamoeba polyphaga mimivirus (APMV).